The primary structure comprises 203 residues: Small ribosomal subunit protein uS4 (203 aa).

In terms of domain architecture, S4 RNA-binding spans 93–156 (RRLDNVVYRL…MKVPAILEAV (64 aa)).

This sequence belongs to the universal ribosomal protein uS4 family. Part of the 30S ribosomal subunit. Contacts protein S5. The interaction surface between S4 and S5 is involved in control of translational fidelity.

In terms of biological role, one of the primary rRNA binding proteins, it binds directly to 16S rRNA where it nucleates assembly of the body of the 30S subunit. With S5 and S12 plays an important role in translational accuracy. This is Small ribosomal subunit protein uS4 from Streptococcus equi subsp. equi (strain 4047).